The following is a 437-amino-acid chain: Nicotinate phosphoribosyltransferase (437 aa).

His231 is modified (phosphohistidine; by autocatalysis).

Belongs to the NAPRTase family. Post-translationally, transiently phosphorylated on a His residue during the reaction cycle. Phosphorylation strongly increases the affinity for substrates and increases the rate of nicotinate D-ribonucleotide production. Dephosphorylation regenerates the low-affinity form of the enzyme, leading to product release.

The catalysed reaction is nicotinate + 5-phospho-alpha-D-ribose 1-diphosphate + ATP + H2O = nicotinate beta-D-ribonucleotide + ADP + phosphate + diphosphate. It functions in the pathway cofactor biosynthesis; NAD(+) biosynthesis; nicotinate D-ribonucleotide from nicotinate: step 1/1. Functionally, catalyzes the synthesis of beta-nicotinate D-ribonucleotide from nicotinate and 5-phospho-D-ribose 1-phosphate at the expense of ATP. The chain is Nicotinate phosphoribosyltransferase from Vibrio vulnificus (strain YJ016).